A 55-amino-acid polypeptide reads, in one-letter code: UPF0391 membrane protein Tbd_2772 (55 aa).

2 consecutive transmembrane segments (helical) span residues 1 to 21 and 28 to 48; these read MFGW…FGFA and AWIA…MLVM.

The protein belongs to the UPF0391 family.

It localises to the cell membrane. The polypeptide is UPF0391 membrane protein Tbd_2772 (Thiobacillus denitrificans (strain ATCC 25259 / T1)).